Reading from the N-terminus, the 232-residue chain is Enterobactin synthase component D (232 aa).

The Mg(2+) site is built by aspartate 106, glutamate 108, and glutamate 150.

It belongs to the P-Pant transferase superfamily. EntD family. In terms of assembly, entB, EntD, EntE, and EntF form a multienzyme complex called enterobactin synthase. Mg(2+) serves as cofactor.

It is found in the membrane. It catalyses the reaction apo-[aryl-carrier protein] + CoA = holo-[aryl-carrier protein] + adenosine 3',5'-bisphosphate + H(+). It carries out the reaction apo-[peptidyl-carrier protein] + CoA = holo-[peptidyl-carrier protein] + adenosine 3',5'-bisphosphate + H(+). The protein operates within siderophore biosynthesis; enterobactin biosynthesis. Functionally, involved in the biosynthesis of the siderophore enterobactin (enterochelin), which is a macrocyclic trimeric lactone of N-(2,3-dihydroxybenzoyl)-serine. The serine trilactone serves as a scaffolding for the three catechol functionalities that provide hexadentate coordination for the tightly ligated iron(2+) atoms. Plays an essential role in the assembly of the enterobactin by catalyzing the transfer of the 4'-phosphopantetheine (Ppant) moiety from coenzyme A to the apo-domains of both EntB (ArCP domain) and EntF (PCP domain) to yield their holo-forms which make them competent for the activation of 2,3-dihydroxybenzoate (DHB) and L-serine, respectively. The chain is Enterobactin synthase component D from Salmonella austin.